A 357-amino-acid polypeptide reads, in one-letter code: Scopoletin 8-hydroxylase (357 aa).

Positions 206–307 constitute a Fe2OG dioxygenase domain; the sequence is MGTKMVNMNY…RVSVPIFTAP (102 aa). Tyrosine 216 is a binding site for 2-oxoglutarate. 3 residues coordinate Fe cation: histidine 231, aspartate 233, and histidine 288. Residues arginine 298 and serine 300 each coordinate 2-oxoglutarate.

This sequence belongs to the iron/ascorbate-dependent oxidoreductase family. Requires L-ascorbate as cofactor. The cofactor is Fe(2+). As to expression, expressed in both primary and lateral roots under iron-deficient conditions, except in apical root zones, and mostly in the root epidermal layer.

The enzyme catalyses scopoletin + 2-oxoglutarate + O2 = fraxetin + succinate + CO2. The protein operates within phenylpropanoid metabolism. Functionally, involved in the pathway of sideretin biosynthesis from feruloyl CoA, a redox-active catecholic metabolite exuded by roots in response to iron deficiency in order to facilitate the uptake of iron; this pathway consists in the successive conversion from feruloyl CoA to scopoletin, from scopoletin to fraxetin and from fraxetin to sideretin. Catalyzes the biosynthesis of fraxetin via scopoletin hydroxylation. This Arabidopsis thaliana (Mouse-ear cress) protein is Scopoletin 8-hydroxylase.